The chain runs to 123 residues: Chaperone protein SycN (123 aa).

As to quaternary structure, interacts with YscB to form a complex which specifically binds to YopN.

The protein localises to the cytoplasm. Its subcellular location is the cell inner membrane. Its function is as follows. Functions as a specific chaperone for YopN. It could facilitate the secretion and the subsequent translocation of YopN. The chain is Chaperone protein SycN (sycN) from Yersinia pseudotuberculosis serotype I (strain IP32953).